Here is a 550-residue protein sequence, read N- to C-terminus: (S)-beta-bisabolene synthase (550 aa).

Asp303, Asp307, Ser451, and Glu455 together coordinate Mg(2+). Positions 303-307 (DDTYD) match the DDXXD motif motif.

The protein belongs to the terpene synthase family. Tpsa subfamily. It depends on Mg(2+) as a cofactor. Mn(2+) is required as a cofactor. Expressed only in young rhizomes. Not detected in leaves, roots and mature rhizomes.

It catalyses the reaction (2E,6E)-farnesyl diphosphate = (S)-beta-bisabolene + diphosphate. Its function is as follows. Sesquiterpene synthase involved in the biosynthesis of bisabolene. This is (S)-beta-bisabolene synthase (TPS1) from Zingiber officinale (Ginger).